The primary structure comprises 297 residues: MSWIERILGRTSSSSSSSKSKVPEGVWTKCTSCEQVLYSEELKRNMHVCPKCNHHMRFDARTRLLSLLDQDSAQEIAAELEPQDVLKFKDLKKYKDRLTAAQKQTGEKDSFITMYGTLHNMPVVVASFNFEFMGGSMGSVVGAKFVRAAERALADNIPFICFSASGGARMQEALFSLMQMAKTSAILAKMREKGIPFISVLTDPTLGGVSASLAMLGDINIAEPKALIGFAGPRVIEQTVREKLPEGFQRAEFLLEHGAIDMIVQRKDMRDTLARLCAKMTNKPTPFKTAELIVEEA.

The disordered stretch occupies residues 1 to 23; that stretch reads MSWIERILGRTSSSSSSSKSKVP. A CoA carboxyltransferase N-terminal domain is found at 26–295; it reads VWTKCTSCEQ…PFKTAELIVE (270 aa). Cys-30, Cys-33, Cys-49, and Cys-52 together coordinate Zn(2+). The segment at 30 to 52 adopts a C4-type zinc-finger fold; it reads CTSCEQVLYSEELKRNMHVCPKC.

This sequence belongs to the AccD/PCCB family. As to quaternary structure, acetyl-CoA carboxylase is a heterohexamer composed of biotin carboxyl carrier protein (AccB), biotin carboxylase (AccC) and two subunits each of ACCase subunit alpha (AccA) and ACCase subunit beta (AccD). Zn(2+) is required as a cofactor.

The protein localises to the cytoplasm. The enzyme catalyses N(6)-carboxybiotinyl-L-lysyl-[protein] + acetyl-CoA = N(6)-biotinyl-L-lysyl-[protein] + malonyl-CoA. The protein operates within lipid metabolism; malonyl-CoA biosynthesis; malonyl-CoA from acetyl-CoA: step 1/1. Functionally, component of the acetyl coenzyme A carboxylase (ACC) complex. Biotin carboxylase (BC) catalyzes the carboxylation of biotin on its carrier protein (BCCP) and then the CO(2) group is transferred by the transcarboxylase to acetyl-CoA to form malonyl-CoA. This chain is Acetyl-coenzyme A carboxylase carboxyl transferase subunit beta, found in Actinobacillus pleuropneumoniae serotype 3 (strain JL03).